We begin with the raw amino-acid sequence, 90 residues long: UPF0213 protein lmo0166 (90 aa).

Residues 5-80 form the GIY-YIG domain; it reads SEHFFYVLKC…KKLSRKNKDA (76 aa).

It belongs to the UPF0213 family.

The chain is UPF0213 protein lmo0166 from Listeria monocytogenes serovar 1/2a (strain ATCC BAA-679 / EGD-e).